We begin with the raw amino-acid sequence, 1133 residues long: Protein TPR3 (1133 aa).

One can recognise a LisH domain in the interval 4–36 (LSRELVFLILQFLDEEKFKETVHKLEQESGFYF). In terms of domain architecture, CTLH spans 34–92 (FYFNMKYFEDEVINGNWDEVERYLGGFTKVDDNRYSMKIFFEIRKQKYLEALDKHDRSK). Residues 287-307 (PTTANPSMDYPSGDSDHVSKR) are disordered. 12 WD repeats span residues 348–388 (SQGS…RLVL), 410–449 (DPTV…DIRQ), 455–496 (AHVG…KQFT), 499–540 (GHEA…SRVD), 543–586 (APGH…VKRT), 590–629 (FRKR…LLTT), 634–673 (GGLP…RLLR), 771–810 (MRTS…RNSS), 837–875 (NPEE…TMTT), 878–918 (PPPP…VKSK), 921–960 (GHSK…KLKS), and 1014–1053 (ENSS…LQCR). Positions 1099–1133 (ESERKWGNPPPAENGSTSALSTPPNGASSSDQPER) are disordered. The span at 1112-1133 (NGSTSALSTPPNGASSSDQPER) shows a compositional bias: polar residues.

Tetramer. Interacts with D53. Interacts with MODD and HDAC1. Interacts with WOX1. Interacts with MOF1. In terms of tissue distribution, expressed in panicles, stems, leaves, spikelets and seed endosperm.

Functionally, probable downstream regulator of strigolactones signaling. Functions in a complex with MODD and HDAC1 to down-regulate the histone acetylation level at BZIP46 target genes. BZIP46 is a positive regulator of abscisic acid (ABA) signaling and drought stress tolerance. The polypeptide is Protein TPR3 (Oryza sativa subsp. japonica (Rice)).